A 143-amino-acid chain; its full sequence is S-protein homolog 11 (143 aa).

A signal peptide spans 1–20 (MNCFSFSFIIIVLCAGSSNA).

Belongs to the plant self-incompatibility (S1) protein family.

Its subcellular location is the secreted. This chain is S-protein homolog 11, found in Arabidopsis thaliana (Mouse-ear cress).